The following is a 304-amino-acid chain: Coenzyme PQQ synthesis protein B (304 aa).

It belongs to the PqqB family.

Its pathway is cofactor biosynthesis; pyrroloquinoline quinone biosynthesis. Functionally, may be involved in the transport of PQQ or its precursor to the periplasm. The polypeptide is Coenzyme PQQ synthesis protein B (Stutzerimonas stutzeri (Pseudomonas stutzeri)).